The following is a 539-amino-acid chain: 3-hydroxy-3-methylglutaryl-coenzyme A reductase 1 (539 aa).

A helical membrane pass occupies residues 63-83; the sequence is FATVVCQLASVVYLLSLFAHP. The segment at 84 to 124 is linker; the sequence is DAPATTTGDDDDGQGGSRRARPAAAEPAPMHGHGGGMMEAD. Residues 87–116 form a disordered region; the sequence is ATTTGDDDDGQGGSRRARPAAAEPAPMHGH. Residues 105 to 114 are compositionally biased toward low complexity; sequence PAAAEPAPMH. A catalytic region spans residues 125–539; it reads DEEIVAAVAS…SSKDVAKAAS (415 aa). Catalysis depends on E218, which acts as the Charge relay system. N-linked (GlcNAc...) asparagine glycosylation is present at N282. Active-site charge relay system residues include K350 and D426. Residues 496 to 516 traverse the membrane as a helical segment; it reads LATIVAGSVLAGELSLLAALA. Catalysis depends on H524, which acts as the Proton donor. An N-linked (GlcNAc...) asparagine glycan is attached at N528.

This sequence belongs to the HMG-CoA reductase family.

It localises to the endoplasmic reticulum membrane. The catalysed reaction is (R)-mevalonate + 2 NADP(+) + CoA = (3S)-3-hydroxy-3-methylglutaryl-CoA + 2 NADPH + 2 H(+). The protein operates within metabolic intermediate biosynthesis; (R)-mevalonate biosynthesis; (R)-mevalonate from acetyl-CoA: step 3/3. In terms of biological role, catalyzes the synthesis of mevalonate. The specific precursor of all isoprenoid compounds present in plants. This Oryza sativa subsp. indica (Rice) protein is 3-hydroxy-3-methylglutaryl-coenzyme A reductase 1 (HMG1).